Here is a 473-residue protein sequence, read N- to C-terminus: Photosystem II CP43 reaction center protein (473 aa).

The propeptide occupies 1 to 14; the sequence is MKTLYSLRRFYPVE. Thr-15 is subject to N-acetylthreonine. Thr-15 bears the Phosphothreonine mark. 5 consecutive transmembrane segments (helical) span residues 69 to 93, 134 to 155, 178 to 200, 255 to 275, and 291 to 312; these read LFEVAHFVPEKPMYEQGLILLPHLA, LLGPETLEESFPFFGYVWKDRN, KALYFGGVYDTWAPGGGDVRKIT, KPFAWARRALVWSGEAYLSYS, and WFNNTAYPSEFYGPTGPEASQA. A [CaMn4O5] cluster-binding site is contributed by Glu-367. Residues 447-471 traverse the membrane as a helical segment; that stretch reads RARAAAAGFEKGIDRDFEPVLSMTP.

It belongs to the PsbB/PsbC family. PsbC subfamily. In terms of assembly, PSII is composed of 1 copy each of membrane proteins PsbA, PsbB, PsbC, PsbD, PsbE, PsbF, PsbH, PsbI, PsbJ, PsbK, PsbL, PsbM, PsbT, PsbX, PsbY, PsbZ, Psb30/Ycf12, at least 3 peripheral proteins of the oxygen-evolving complex and a large number of cofactors. It forms dimeric complexes. Requires Binds multiple chlorophylls and provides some of the ligands for the Ca-4Mn-5O cluster of the oxygen-evolving complex. It may also provide a ligand for a Cl- that is required for oxygen evolution. PSII binds additional chlorophylls, carotenoids and specific lipids. as cofactor.

The protein resides in the plastid. The protein localises to the chloroplast thylakoid membrane. In terms of biological role, one of the components of the core complex of photosystem II (PSII). It binds chlorophyll and helps catalyze the primary light-induced photochemical processes of PSII. PSII is a light-driven water:plastoquinone oxidoreductase, using light energy to abstract electrons from H(2)O, generating O(2) and a proton gradient subsequently used for ATP formation. The sequence is that of Photosystem II CP43 reaction center protein from Lactuca sativa (Garden lettuce).